A 333-amino-acid polypeptide reads, in one-letter code: Glycerol-3-phosphate dehydrogenase [NAD(P)+] (333 aa).

5 residues coordinate NADPH: Ser-10, Trp-11, His-31, Arg-32, and Lys-105. Sn-glycerol 3-phosphate is bound by residues Lys-105, Gly-136, and Ser-138. An NADPH-binding site is contributed by Ala-140. The sn-glycerol 3-phosphate site is built by Lys-191, Asp-244, Ser-254, Arg-255, and Asn-256. Residue Lys-191 is the Proton acceptor of the active site. Arg-255 provides a ligand contact to NADPH. Residues Ile-279 and Glu-281 each contribute to the NADPH site.

Belongs to the NAD-dependent glycerol-3-phosphate dehydrogenase family.

It is found in the cytoplasm. It catalyses the reaction sn-glycerol 3-phosphate + NAD(+) = dihydroxyacetone phosphate + NADH + H(+). It carries out the reaction sn-glycerol 3-phosphate + NADP(+) = dihydroxyacetone phosphate + NADPH + H(+). It participates in membrane lipid metabolism; glycerophospholipid metabolism. Its function is as follows. Catalyzes the reduction of the glycolytic intermediate dihydroxyacetone phosphate (DHAP) to sn-glycerol 3-phosphate (G3P), the key precursor for phospholipid synthesis. The protein is Glycerol-3-phosphate dehydrogenase [NAD(P)+] of Pelodictyon phaeoclathratiforme (strain DSM 5477 / BU-1).